We begin with the raw amino-acid sequence, 155 residues long: Large ribosomal subunit protein eL24 (155 aa).

Residues 92–155 (AKRNMKPEVR…KAAPRVGGKR (64 aa)) form a disordered region. Positions 96–117 (MKPEVRKAQREQAIKQAKEQKK) are enriched in basic and acidic residues. Positions 124–133 (KTTAPPTKGK) are enriched in low complexity.

Belongs to the eukaryotic ribosomal protein eL24 family.

This is Large ribosomal subunit protein eL24 (RpL24) from Plutella xylostella (Diamondback moth).